Here is a 1000-residue protein sequence, read N- to C-terminus: Probable coatomer subunit beta' (1000 aa).

7 WD repeats span residues 13–52 (ARSDRVKCVDLHPVETWLLAALYNGNVHIWNYETQTLVKS), 55–94 (VCDVPVRAAKFVPRKSWVVTGSDDMHIRVFNYNTLERVHQ), 97–136 (AHSDYLRSLVVHPTLPYVISSSDDMLVKMWDWDNKWAMKQ), 140–180 (GHTH…PNFT), 183–224 (GHEK…CVQT), 227–266 (GHAQNVSSVCFHPELPLIITGSEDSTVRLWHANTYRLETT), and 351–391 (LGSS…NKDF). Positions 863–1000 (PRQTETQLKA…MDDLNLDEED (138 aa)) are disordered. The span at 901–915 (EPEEEEEQEEFDDDQ) shows a compositional bias: acidic residues. Residues 960–969 (SASSQQSAQD) show a composition bias toward low complexity. The segment covering 970-1000 (FQDDTQWSDEDFGDAENGDLNMDDLNLDEED) has biased composition (acidic residues).

It belongs to the WD repeat COPB2 family. In terms of assembly, oligomeric complex that consists of at least the alpha, beta, beta', gamma, delta, epsilon and zeta subunits.

It is found in the cytoplasm. Its subcellular location is the golgi apparatus membrane. The protein resides in the cytoplasmic vesicle. It localises to the COPI-coated vesicle membrane. The coatomer is a cytosolic protein complex that binds to dilysine motifs and reversibly associates with Golgi non-clathrin-coated vesicles, which further mediate biosynthetic protein transport from the ER, via the Golgi up to the trans Golgi network. Coatomer complex is required for budding from Golgi membranes, and is essential for the retrograde Golgi-to-ER transport of dilysine-tagged proteins. This Caenorhabditis elegans protein is Probable coatomer subunit beta' (copb-2).